The chain runs to 1123 residues: Eukaryotic translation initiation factor 2-alpha kinase PK4 (1123 aa).

A disordered region spans residues 1–30 (MKKRIRSSYKVGSSNKYHKKNYTDNEKDKK). Positions 21-30 (NYTDNEKDKK) are enriched in basic and acidic residues. ATP-binding positions include 245–253 (IGQGGFGSV) and Lys270. 3 disordered regions span residues 409–493 (FYSD…NDEG), 572–609 (RNED…NELD), and 742–800 (ENDD…DDDI). Residues 419–428 (KNKENPEKNH) are compositionally biased toward basic and acidic residues. Basic residues predominate over residues 455–477 (HKLKKRKNKKKKSKKKRKSKSKI). Repeat copies occupy residues 576–582 (DKNGLDG), 583–589 (DKNGLDG), 590–596 (DKNGLDG), 597–603 (DKNGLDG), and 604–610 (DKNELDD). The tract at residues 576–610 (DKNGLDGDKNGLDGDKNGLDGDKNGLDGDKNELDD) is 5 X 7 AA tandem repeat of D-K-N-[GE]-L-D-[GD]. Residues 678–1049 (TNVESINTNG…KIKVLLDPHL (372 aa)) enclose the Protein kinase domain. The span at 743-754 (NDDDDDDDDDDN) shows a compositional bias: acidic residues. Residue Asp886 is the Proton acceptor of the active site. Thr953 is modified (phosphothreonine).

It belongs to the protein kinase superfamily. Ser/Thr protein kinase family. GCN2 subfamily. As to quaternary structure, may form oligomers in response to stress; oligomerization may result in catalytic activity. Interacts with BIP; the interaction is disrupted in response to stress. Auto-phosphorylated.

Its subcellular location is the endoplasmic reticulum membrane. It catalyses the reaction L-seryl-[protein] + ATP = O-phospho-L-seryl-[protein] + ADP + H(+). The catalysed reaction is L-threonyl-[protein] + ATP = O-phospho-L-threonyl-[protein] + ADP + H(+). Its activity is regulated as follows. Dissociation from BIP and oligomerization, may results autophosphorylation and kinase activity induction. In terms of biological role, during the asexual blood stage, phosphorylates translation factor eIF2alpha in late schizonts resulting in protein translation inhibition. Plays a role in trophozoite differentiation into schizonts. This chain is Eukaryotic translation initiation factor 2-alpha kinase PK4, found in Plasmodium falciparum.